Reading from the N-terminus, the 101-residue chain is Urease subunit beta (101 aa).

It belongs to the urease beta subunit family. In terms of assembly, heterotrimer of UreA (gamma), UreB (beta) and UreC (alpha) subunits. Three heterotrimers associate to form the active enzyme.

It localises to the cytoplasm. It catalyses the reaction urea + 2 H2O + H(+) = hydrogencarbonate + 2 NH4(+). It participates in nitrogen metabolism; urea degradation; CO(2) and NH(3) from urea (urease route): step 1/1. In Ruegeria sp. (strain TM1040) (Silicibacter sp.), this protein is Urease subunit beta.